The chain runs to 267 residues: 2-keto-3-deoxy-L-rhamnonate aldolase (267 aa).

Residue His-49 is the Proton acceptor of the active site. A substrate-binding site is contributed by Gln-151. Glu-153 is a binding site for Mg(2+). Positions 178 and 179 each coordinate substrate. Mg(2+) is bound at residue Asp-179.

The protein belongs to the HpcH/HpaI aldolase family. KDR aldolase subfamily. Homohexamer. Requires Mg(2+) as cofactor.

The enzyme catalyses 2-dehydro-3-deoxy-L-rhamnonate = (S)-lactaldehyde + pyruvate. Functionally, catalyzes the reversible retro-aldol cleavage of 2-keto-3-deoxy-L-rhamnonate (KDR) to pyruvate and lactaldehyde. The protein is 2-keto-3-deoxy-L-rhamnonate aldolase of Escherichia coli O157:H7.